A 324-amino-acid polypeptide reads, in one-letter code: Acetyl-coenzyme A carboxylase carboxyl transferase subunit alpha (324 aa).

The region spanning 42–296 (RLSELEEEVY…EKALTRLAEK (255 aa)) is the CoA carboxyltransferase C-terminal domain.

The protein belongs to the AccA family. As to quaternary structure, acetyl-CoA carboxylase is a heterohexamer composed of biotin carboxyl carrier protein (AccB), biotin carboxylase (AccC) and two subunits each of ACCase subunit alpha (AccA) and ACCase subunit beta (AccD).

It localises to the cytoplasm. It catalyses the reaction N(6)-carboxybiotinyl-L-lysyl-[protein] + acetyl-CoA = N(6)-biotinyl-L-lysyl-[protein] + malonyl-CoA. It functions in the pathway lipid metabolism; malonyl-CoA biosynthesis; malonyl-CoA from acetyl-CoA: step 1/1. In terms of biological role, component of the acetyl coenzyme A carboxylase (ACC) complex. First, biotin carboxylase catalyzes the carboxylation of biotin on its carrier protein (BCCP) and then the CO(2) group is transferred by the carboxyltransferase to acetyl-CoA to form malonyl-CoA. This chain is Acetyl-coenzyme A carboxylase carboxyl transferase subunit alpha, found in Shouchella clausii (strain KSM-K16) (Alkalihalobacillus clausii).